A 273-amino-acid polypeptide reads, in one-letter code: Inactive endochitinase At2g43600 (273 aa).

An N-terminal signal peptide occupies residues 1–22 (MTIKNVIFSLFILAILAETVFS). Positions 23–61 (QNCMDTSCPGLKECCSRWGFCGTKDEYCGFFCFSGPCNI) constitute a Chitin-binding type-1 domain. Intrachain disulfides connect C25–C37, C30–C43, C36–C50, and C54–C59. A catalytic region spans residues 78 to 273 (GKIETVITSA…GVTPDQGLDC (196 aa)). A glycan (N-linked (GlcNAc...) asparagine) is linked at N99.

It belongs to the glycosyl hydrolase 19 family. Chitinase class I subfamily.

This chain is Inactive endochitinase At2g43600, found in Arabidopsis thaliana (Mouse-ear cress).